We begin with the raw amino-acid sequence, 633 residues long: Cyclic GMP-AMP synthase-like receptor 1 (633 aa).

Disordered stretches follow at residues 23–80 (KVHG…HPHT), 107–214 (FKGP…TDPF), and 250–276 (REDD…RPSS). Positions 29–67 (KQHESAHPPRERHTERTATKRSDETKTASRPTASHEGKT) are enriched in basic and acidic residues. Residues 68–80 (HTTNPRGQVHPHT) show a composition bias toward polar residues. 3 stretches are compositionally biased toward basic and acidic residues: residues 125 to 143 (RKPE…DHRT), 176 to 194 (RKPD…DHRT), and 250 to 274 (REDD…DDRP). Residues glutamate 353, aspartate 355, and aspartate 455 each contribute to the Mg(2+) site.

The protein belongs to the mab-21 family. Mg(2+) serves as cofactor. Mn(2+) is required as a cofactor.

It carries out the reaction UTP + ATP = 2',3'-cUAMP + 2 diphosphate. Functionally, nucleotidyltransferase that catalyzes the formation of cyclic UMP-AMP (2',3'-cUAMP) from ATP and UTP and plays a key role in innate immunity. Acts as a key sensor of double-stranded DNA (dsDNA), the presence of dsDNA in the cytoplasm being a danger signal that triggers the immune responses. Directly binds dsDNA, activating the nucleotidyltransferase activity, leading to synthesis of 2',3'-cUAMP, a second messenger that binds to and activates Sting, thereby triggering the immune response via activation of the NF-kappa-B transcription factor. The protein is Cyclic GMP-AMP synthase-like receptor 1 of Crassostrea virginica (Eastern oyster).